The sequence spans 355 residues: 6-aminohexanoate-oligomer endohydrolase (355 aa).

Residue Thr-267 is the Nucleophile of the active site.

It belongs to the peptidase S58 family. Heterotetramer composed of 4 alpha/beta heterodimers. Post-translationally, expressed as an inactive precursor that is cleaved autocatalytically at Asn266/Thr267 to generate an active enzyme composed of an alpha subunit and a beta subunit.

The catalysed reaction is [N-(6-aminohexanoyl)]n + H2O = [N-(6-aminohexanoyl)]n-x + [N-(6-aminohexanoyl)]x.. It functions in the pathway xenobiotic degradation; nylon-6 oligomer degradation. Involved in the degradation of nylon-6 oligomers. Degrades cyclic and linear oligomers of 6-aminohexanoate (Ahx) with a degree of polymerization greater than three by an endo-type mode. Cannot use Ahx cyclic dimer or the Ahx linear dimer. The polypeptide is 6-aminohexanoate-oligomer endohydrolase (Kocuria sp. (strain KY2)).